The chain runs to 270 residues: Formamidopyrimidine-DNA glycosylase (270 aa).

Proline 2 serves as the catalytic Schiff-base intermediate with DNA. The active-site Proton donor is the glutamate 3. Lysine 56 serves as the catalytic Proton donor; for beta-elimination activity. 3 residues coordinate DNA: histidine 89, arginine 107, and arginine 151. The segment at 236–270 (TVYGRAGEPCRVCATPIRLLRQGQRSTYYCPNCQK) adopts an FPG-type zinc-finger fold. The active-site Proton donor; for delta-elimination activity is arginine 260.

This sequence belongs to the FPG family. In terms of assembly, monomer. Zn(2+) is required as a cofactor.

It catalyses the reaction Hydrolysis of DNA containing ring-opened 7-methylguanine residues, releasing 2,6-diamino-4-hydroxy-5-(N-methyl)formamidopyrimidine.. The catalysed reaction is 2'-deoxyribonucleotide-(2'-deoxyribose 5'-phosphate)-2'-deoxyribonucleotide-DNA = a 3'-end 2'-deoxyribonucleotide-(2,3-dehydro-2,3-deoxyribose 5'-phosphate)-DNA + a 5'-end 5'-phospho-2'-deoxyribonucleoside-DNA + H(+). Functionally, involved in base excision repair of DNA damaged by oxidation or by mutagenic agents. Acts as a DNA glycosylase that recognizes and removes damaged bases. Has a preference for oxidized purines, such as 7,8-dihydro-8-oxoguanine (8-oxoG). Has AP (apurinic/apyrimidinic) lyase activity and introduces nicks in the DNA strand. Cleaves the DNA backbone by beta-delta elimination to generate a single-strand break at the site of the removed base with both 3'- and 5'-phosphates. This chain is Formamidopyrimidine-DNA glycosylase, found in Variovorax paradoxus (strain S110).